The chain runs to 290 residues: Pyridoxal kinase PdxY (290 aa).

Residues Ser-12 and 47 to 48 contribute to the substrate site; that span reads TQ. ATP-binding positions include Asp-114, Glu-151, Lys-184, and 211–214; that span reads RPLL. A substrate-binding site is contributed by Asp-225.

The protein belongs to the pyridoxine kinase family. PdxY subfamily. As to quaternary structure, homodimer. Requires Mg(2+) as cofactor.

It carries out the reaction pyridoxal + ATP = pyridoxal 5'-phosphate + ADP + H(+). It functions in the pathway cofactor metabolism; pyridoxal 5'-phosphate salvage; pyridoxal 5'-phosphate from pyridoxal: step 1/1. Functionally, pyridoxal kinase involved in the salvage pathway of pyridoxal 5'-phosphate (PLP). Catalyzes the phosphorylation of pyridoxal to PLP. In Pseudomonas fluorescens (strain ATCC BAA-477 / NRRL B-23932 / Pf-5), this protein is Pyridoxal kinase PdxY.